The primary structure comprises 873 residues: MRFGWLEVAALTAASVANAQVFDNSHGNNQELAFSPPFYPSPWADGQGEWADAHRRAVEIVSQMTLAEKVNLTTGTGWEMDRCVGQTGSVPRLGINWGLCGQDSPLGIRFSDLNSAFPAGTNVAATWDKTLAYLRGKAMGEEFNDKGVDILLGPAAGPLGKYPDGGRIWEGFSPDPALTGVLFAETIKGIQDAGVIATAKHYILNEQEHFRQVGEAQGYGYNITETISSNVDDKTMHELYLWPFADAVRAGVGAVMCSYNQINNSYGCQNSQTLNKLLKAELGFQGFVMSDWSAHHSGVGAALAGLDMSMPGDISFDDGLSFWGTNLTVSVLNGTVPAWRVDDMAVRIMTAYYKVGRDRLRIPPNFSSWTRDEYGWEHSAVSEGAWTKVNDFVNVQRSHSQIIREIGAASTVLLKNTGALPLTGKEVKVGVLGEDAGSNPWGANGCPDRGCDNGTLAMAWGSGTANFPYLVTPEQAIQREVISNGGNVFAVTDNGALSQMADVASQSSVSLVFVNADSGEGFISVDGNEGDRKNLTLWKNGEAVIDTVVSHCNNTIVVIHSVGPVLIDRWYDNPNVTAIIWAGLPGQESGNSLVDVLYGRVNPSAKTPFTWGKTRESYGAPLLTEPNNGNGAPQDDFNEGVFIDYRHFDKRNETPIYEFGHGLSYTTFGYSHLRVQALNSSSSAYVPTSGETKPAPTYGEIGSAADYLYPEGLKRITKFIYPWLNSTDLEDSSDDPNYGWQDSEYIPEGARDGSPQPLLKAGGAPGGNPTLYQDLVRVSATITNTGNVAGYEVPQLYVSLGGPNEPRVVLRKFDRIFLAPGEQKVWTTTLNRRDLANWDVEAQDWVITKYPKKVHVGSSSRKLPLRAPLPRVY.

A signal peptide spans 1 to 19; that stretch reads MRFGWLEVAALTAASVANA. N-linked (GlcNAc...) asparagine glycosylation is found at Asn71, Asn222, and Asn263. The active site involves Asp291. Residues Asn326, Asn333, Asn365, Asn453, Asn534, Asn553, Asn575, Asn679, and Asn725 are each glycosylated (N-linked (GlcNAc...) asparagine). Positions 731–764 are disordered; that stretch reads DSSDDPNYGWQDSEYIPEGARDGSPQPLLKAGGA.

It belongs to the glycosyl hydrolase 3 family.

It is found in the secreted. The catalysed reaction is Hydrolysis of terminal, non-reducing beta-D-glucosyl residues with release of beta-D-glucose.. It functions in the pathway glycan metabolism; cellulose degradation. Its function is as follows. Beta-glucosidases are one of a number of cellulolytic enzymes involved in the degradation of cellulosic biomass. Catalyzes the last step releasing glucose from the inhibitory cellobiose. This Aspergillus fumigatus (strain ATCC MYA-4609 / CBS 101355 / FGSC A1100 / Af293) (Neosartorya fumigata) protein is Probable beta-glucosidase A (bglA).